Reading from the N-terminus, the 314-residue chain is WD repeat-containing protein 38 (314 aa).

7 WD repeats span residues 19 to 58 (QHGG…LLWR), 61 to 100 (GHTG…CLRV), 103 to 142 (GHQR…MLRL), 145 to 184 (GHRD…PAVS), 190 to 228 (GHSA…LLIQ), 231 to 272 (GHVT…ETLK), and 274 to 312 (VLDV…PRDP). The tract at residues 294–314 (AADQTRRQISRTSKSPRDPQT) is disordered.

The chain is WD repeat-containing protein 38 (WDR38) from Homo sapiens (Human).